The sequence spans 382 residues: Gap junction alpha-1 protein (382 aa).

At 2–23 (GDWSALGKLLDKVQAYSTAGGK) the chain is on the cytoplasmic side. At Ser5 the chain carries Phosphoserine. A helical membrane pass occupies residues 24–44 (VWLSVLFIFRILLLGTAVESA). Residues 45–76 (WGDEQSAFRCNTQQPGCENVCYDKSFPISHVR) are Extracellular-facing. Cystine bridges form between Cys54/Cys192 and Cys187/Cys198. A helical transmembrane segment spans residues 77-97 (FWVLQIIFVSVPTLLYLAHVF). Over 98–155 (YVMRKEEKLNKKEEELKVAQTDGVNVEMHLKQIEIKKFKYGIEEHGKVKMRGGLLRTY) the chain is Cytoplasmic. Lys144 is covalently cross-linked (Glycyl lysine isopeptide (Lys-Gly) (interchain with G-Cter in SUMO)). A helical membrane pass occupies residues 156-176 (IISILFKSVFEVAFLLIQWYI). Residues 177 to 207 (YGFSLSAVYTCKRDPCPHQVDCFLSRPTEKT) lie on the Extracellular side of the membrane. Residues 208–228 (IFIIFMLVVSLVSLALNIIEL) form a helical membrane-spanning segment. The Cytoplasmic segment spans residues 229 to 382 (FYAFFKGVKD…SRPRPDDLEI (154 aa)). Lys237 participates in a covalent cross-link: Glycyl lysine isopeptide (Lys-Gly) (interchain with G-Cter in SUMO). Residues 244 to 382 (SDPYHATTGP…SRPRPDDLEI (139 aa)) form an interaction with NOV region. Tyr247 is subject to Phosphotyrosine. 3 positions are modified to phosphoserine: Ser255, Ser257, and Ser262. The segment at 264 to 382 (KYAYFNGCSS…SRPRPDDLEI (119 aa)) is interaction with UBQLN4. Position 271 is an S-nitrosocysteine (Cys271). The residue at position 275 (Thr275) is a Phosphothreonine. 2 positions are modified to phosphoserine: Ser306 and Ser314. Residues 317 to 332 (QNRMGQAGSTISNSHA) are compositionally biased toward polar residues. The disordered stretch occupies residues 317–382 (QNRMGQAGST…SRPRPDDLEI (66 aa)). Ser325 is modified (phosphoserine; by CK1). Residue Thr326 is modified to Phosphothreonine. Phosphoserine; by CK1 occurs at positions 328 and 330. The segment covering 342-351 (QNSKKLDAGH) has biased composition (basic and acidic residues). Phosphoserine is present on residues Ser344 and Ser365. Residues 362–374 (RPSSRASSRASSR) show a composition bias toward low complexity. A Phosphoserine; by PKC/PRKCG and PKC/PRKCD modification is found at Ser368. Phosphoserine occurs at positions 369 and 373.

It belongs to the connexin family. Alpha-type (group II) subfamily. A connexon is composed of a hexamer of connexins. Interacts with SGSM3. Interacts with RIC1/CIP150. Interacts with CNST and CSNK1D. Interacts (via C-terminus) with TJP1. Interacts (via C-terminus) with SRC (via SH3 domain). Interacts (not ubiquitinated) with UBQLN4 (via UBA domain). Interacts with NOV. Interacts with TMEM65. Interacts with ANK3/ANKG and PKP2. Post-translationally, phosphorylation at Ser-325, Ser-328 and Ser-330 by CK1 modulates gap junction assembly. Phosphorylated at Ser-368 by PRKCG; phosphorylation induces disassembly of gap junction plaques and inhibition of gap junction activity. Phosphorylation at Ser-368 by PRKCD triggers its internalization into small vesicles leading to proteasome-mediated degradation. Sumoylated with SUMO1, SUMO2 and SUMO3, which may regulate the level of functional Cx43 gap junctions at the plasma membrane. May be desumoylated by SENP1 or SENP2. In terms of processing, S-nitrosylation at Cys-271 is enriched at the muscle endothelial gap junction in arteries, it augments channel permeability and may regulate of smooth muscle cell to endothelial cell communication. Post-translationally, acetylated in the developing cortex; leading to delocalization from the cell membrane.

It is found in the cell membrane. The protein localises to the cell junction. Its subcellular location is the gap junction. The protein resides in the endoplasmic reticulum. Gap junction protein that acts as a regulator of bladder capacity. A gap junction consists of a cluster of closely packed pairs of transmembrane channels, the connexons, through which materials of low MW diffuse from one cell to a neighboring cell. May play a critical role in the physiology of hearing by participating in the recycling of potassium to the cochlear endolymph. Negative regulator of bladder functional capacity: acts by enhancing intercellular electrical and chemical transmission, thus sensitizing bladder muscles to cholinergic neural stimuli and causing them to contract. May play a role in cell growth inhibition through the regulation of NOV expression and localization. Plays an essential role in gap junction communication in the ventricles. This is Gap junction alpha-1 protein (GJA1) from Sus scrofa (Pig).